The chain runs to 326 residues: DnaJ homolog subfamily B member 6 (326 aa).

Residues 2-69 form the J domain; sequence VDYYEVLGVQ…KKRDIYDKYG (68 aa). The interaction with HSP70 stretch occupies residues 2–146; that stretch reads VDYYEVLGVQ…TGSFFSAFSG (145 aa). Positions 119 to 242 are interaction with KRT18; sequence FEDFFGNRRG…ADDDALAEER (124 aa). At Arg-135 the chain carries Omega-N-methylarginine. Positions 249-326 are disordered; sequence ALPAQPAGLR…KKKKSTKGNH (78 aa). Ser-277 carries the phosphoserine modification.

As to quaternary structure, homooligomer. Interacts with BAG3, HSPB8 and STUB1. Interacts with ALKBH1. Interacts with HSP70, KRT18 and PTTG.

It localises to the cytoplasm. The protein resides in the perinuclear region. Its subcellular location is the nucleus. It is found in the myofibril. The protein localises to the sarcomere. It localises to the z line. Has a stimulatory effect on the ATPase activity of HSP70 in a dose-dependent and time-dependent manner and hence acts as a co-chaperone of HSP70. Plays an indispensable role in the organization of KRT8/KRT18 filaments. Acts as an endogenous molecular chaperone for neuronal proteins including huntingtin. Suppresses aggregation and toxicity of polyglutamine-containing, aggregation-prone proteins. Also reduces cellular toxicity and caspase-3 activity. The chain is DnaJ homolog subfamily B member 6 (DNAJB6) from Pongo abelii (Sumatran orangutan).